We begin with the raw amino-acid sequence, 665 residues long: Probable potassium transport system protein Kup 2 (665 aa).

The next 13 helical transmembrane spans lie at 13-33 (GLLVSIGIVYGDIGTSPLYVM), 55-75 (ISLILWTITLLTTVKYVLIAL), 98-118 (WLVLPALIGGAALLADGTLTP), 138-158 (IPVPNQNSVLIITIIILLFLF), 167-187 (IIGKTFGPIMLIWFTFLGLTG), 195-215 (LSLLEALNPVLAVKILFSPAN), 217-237 (VGVLILGAVFLATTGAEALYS), 250-270 (SWPYVFICLALNYLGQGVWIL), 295-315 (FFAIILATLAAIIASQALITG), 344-364 (IFIPSINKMLCAATIGIVFLF), 375-395 (GLAITVTMLMTTILLFEYLSL), 400-420 (ILLRLVFLFLFGAIESMFLIS), and 428-448 (GGYVTVIIAAFIGAIMYIWYF).

The protein belongs to the HAK/KUP transporter (TC 2.A.72) family.

The protein resides in the cell membrane. It carries out the reaction K(+)(in) + H(+)(in) = K(+)(out) + H(+)(out). In terms of biological role, transport of potassium into the cell. Likely operates as a K(+):H(+) symporter. The chain is Probable potassium transport system protein Kup 2 from Lactobacillus johnsonii (strain CNCM I-12250 / La1 / NCC 533).